A 428-amino-acid polypeptide reads, in one-letter code: Endoplasmic reticulum junction formation protein lunapark (428 aa).

A lipid anchor (N-myristoyl glycine) is attached at glycine 2. At 2 to 45 (GGLFSRWRTKLSTVEVLESIDKEIQALEEFREKNQRLQKLRVGR) the chain is on the cytoplasmic side. Residues 16 to 43 (EVLESIDKEIQALEEFREKNQRLQKLRV) adopt a coiled-coil conformation. A helical membrane pass occupies residues 46–66 (LILYSSVLYLFTCLIVYLWYL). At 67 to 77 (PDEFTARLAMT) the chain is on the lumenal side. Residues 78–98 (LPFFAFPLIIWSIRTVIIFFF) form a helical membrane-spanning segment. The Cytoplasmic portion of the chain corresponds to 99 to 428 (SKRTERNNEA…ELNGESLTAE (330 aa)). A coiled-coil region spans residues 102–128 (TERNNEALDDLKSQRKKILEEVMEKET). A phosphoserine mark is found at serine 114, serine 153, serine 177, serine 182, and serine 194. The tract at residues 143–248 (SKKAKECEPP…PPGPPLARPI (106 aa)) is disordered. The segment covering 185–198 (QGPPPQVPVSPGPP) has biased composition (pro residues). A phosphothreonine mark is found at threonine 211 and threonine 213. A phosphoserine mark is found at serine 217 and serine 227. The C4-type; plays a role in ER morphology zinc-finger motif lies at 276–301 (CQQCFSHNGMALKEEFEYIAFRCAYC). Residues serine 321, serine 353, and serine 384 each carry the phosphoserine modification. Residues 361-428 (NNTEQTDDKI…ELNGESLTAE (68 aa)) are disordered. Residues 386–401 (SEEPEEKQETENEEAS) show a composition bias toward acidic residues. Residue serine 414 is modified to Phosphoserine.

This sequence belongs to the lunapark family. As to quaternary structure, homodimer; homodimerization requires the C4-type zinc finger motif and decreases during mitosis in a phosphorylation-dependent manner. Post-translationally, myristoylated; myristoylation is necessary for the endoplasmic reticulum (ER) three-way ER tubular junction formation, but is not required neither for membrane translocation, membrane topology formation, nor for the specific localization to ER membranes. In terms of processing, phosphorylated. Phosphorylation occurs at Ser-177, Ser-182, Ser-217, Ser-227, Ser-321 and Ser-384 during interphase. Phosphorylation occurs at Ser-114, Ser-153, Ser-194, Thr-211 and Ser-353 during mitosis; these phosphorylations reduce both its homodimerization and the ER three-way tubular junction formation. Subject to proteasomal degradation following phosphorylation during mitosis.

Its subcellular location is the endoplasmic reticulum membrane. Its function is as follows. Endoplasmic reticulum (ER)-shaping membrane protein that plays a role in determining ER morphology. Involved in the stabilization of nascent three-way ER tubular junctions within the ER network. May also play a role as a curvature-stabilizing protein within three-way ER tubular junction network. May be involved in limb and central nervous system development. This is Endoplasmic reticulum junction formation protein lunapark from Pongo abelii (Sumatran orangutan).